The chain runs to 129 residues: MHLAYPAVLSALLFSTGLYGVLARRNAILVLMSVELMLNAVNLNLVAFDVWLSKTARDTLHSGQALTLFTIAIAAAEIGIGLAIVLAVYRNRGTSDIDKLRDTAEGPEPDGPGTDGSAPTAAEKAEATA.

Transmembrane regions (helical) follow at residues 3 to 23, 28 to 48, and 68 to 88; these read LAYP…GVLA, ILVL…LVAF, and LFTI…VLAV. The interval 98–129 is disordered; the sequence is DKLRDTAEGPEPDGPGTDGSAPTAAEKAEATA. Residues 111–122 are compositionally biased toward low complexity; it reads GPGTDGSAPTAA.

This sequence belongs to the complex I subunit 4L family. As to quaternary structure, NDH-1 is composed of 14 different subunits. Subunits NuoA, H, J, K, L, M, N constitute the membrane sector of the complex.

It localises to the cell membrane. The catalysed reaction is a quinone + NADH + 5 H(+)(in) = a quinol + NAD(+) + 4 H(+)(out). Its function is as follows. NDH-1 shuttles electrons from NADH, via FMN and iron-sulfur (Fe-S) centers, to quinones in the respiratory chain. The immediate electron acceptor for the enzyme in this species is believed to be a menaquinone. Couples the redox reaction to proton translocation (for every two electrons transferred, four hydrogen ions are translocated across the cytoplasmic membrane), and thus conserves the redox energy in a proton gradient. The sequence is that of NADH-quinone oxidoreductase subunit K 2 from Streptomyces avermitilis (strain ATCC 31267 / DSM 46492 / JCM 5070 / NBRC 14893 / NCIMB 12804 / NRRL 8165 / MA-4680).